Reading from the N-terminus, the 62-residue chain is Photosystem II reaction center protein Z (62 aa).

2 helical membrane passes run 8 to 28 (ALIALVLFSFVMVIGVPVAYA) and 41 to 61 (YLGSAIWAILVVIVAILNFFV).

Belongs to the PsbZ family. As to quaternary structure, PSII is composed of 1 copy each of membrane proteins PsbA, PsbB, PsbC, PsbD, PsbE, PsbF, PsbH, PsbI, PsbJ, PsbK, PsbL, PsbM, PsbT, PsbX, PsbY, PsbZ, Psb30/Ycf12, peripheral proteins PsbO, CyanoQ (PsbQ), PsbU, PsbV and a large number of cofactors. It forms dimeric complexes.

The protein resides in the cellular thylakoid membrane. In terms of biological role, may control the interaction of photosystem II (PSII) cores with the light-harvesting antenna, regulates electron flow through the 2 photosystem reaction centers. PSII is a light-driven water plastoquinone oxidoreductase, using light energy to abstract electrons from H(2)O, generating a proton gradient subsequently used for ATP formation. The chain is Photosystem II reaction center protein Z from Rippkaea orientalis (strain PCC 8801 / RF-1) (Cyanothece sp. (strain PCC 8801)).